The chain runs to 85 residues: MASFKIVIVCLALLVAVACARRRDMMSDDELDFHLSKRGIPCACDSDGPDIRSASLSGIVWMGSCPSGWKKCKSYYSIVADCCNQ.

An N-terminal signal peptide occupies residues 1–20; it reads MASFKIVIVCLALLVAVACA. A propeptide spanning residues 21 to 36 is cleaved from the precursor; that stretch reads RRRDMMSDDELDFHLS. Intrachain disulfides connect C42-C82, C44-C72, and C65-C83.

Belongs to the sea anemone sodium channel inhibitory toxin family. Type II subfamily. In terms of tissue distribution, expressed in ectodermal glands and in clumps outside of the extodermal layer. Is not expressed in nematocytes. In adult female tissues, shows similar expression levels in mesenteries (gametes-producing tissue), tentacles, pharynx and physa.

The protein resides in the secreted. Binds to site 3 of voltage-gated sodium channels and inhibits the inactivation process. Is highly active on DmNav1/TipE (drosophila) and is only extremely weakly active on rat Nav1.4-beta-1/SCN4A-SCN1B, and on human Nav1.5-beta-1/SCN5A-beta-1. This reveals high specificity for arthropod over mammalian channels. In vivo, when released into the medium, this recombinant toxin induces impaired swimming, paralysis and death of the crustacean A.nauplii within several hours. Also causes paralysis of cherry shrimps immediately after injection at very low doses. Its effect on zebrafish (D.rerio) larvae is also rapid, since it induces tail twitching accompanied by impaired swimming after 20 minutes and complete paralysis within 45 minutes. It has also been observed to cause death of zebrafish larvae within 1 hour. This is N.vectensis toxin 1 5 from Nematostella vectensis (Starlet sea anemone).